Consider the following 76-residue polypeptide: Small ribosomal subunit protein bS18 (76 aa).

It belongs to the bacterial ribosomal protein bS18 family. Part of the 30S ribosomal subunit. Forms a tight heterodimer with protein bS6.

In terms of biological role, binds as a heterodimer with protein bS6 to the central domain of the 16S rRNA, where it helps stabilize the platform of the 30S subunit. In Pelotomaculum thermopropionicum (strain DSM 13744 / JCM 10971 / SI), this protein is Small ribosomal subunit protein bS18.